The sequence spans 282 residues: NADPH-dependent 7-cyano-7-deazaguanine reductase (282 aa).

Ile88–Ser90 is a substrate binding site. Residue Ser90–Lys91 coordinates NADPH. The active-site Thioimide intermediate is Cys190. The active-site Proton donor is the Asp197. Residue His229–Glu230 participates in substrate binding. Residue Arg258–Gly259 coordinates NADPH.

The protein belongs to the GTP cyclohydrolase I family. QueF type 2 subfamily. In terms of assembly, homodimer.

The protein localises to the cytoplasm. The enzyme catalyses 7-aminomethyl-7-carbaguanine + 2 NADP(+) = 7-cyano-7-deazaguanine + 2 NADPH + 3 H(+). It functions in the pathway tRNA modification; tRNA-queuosine biosynthesis. In terms of biological role, catalyzes the NADPH-dependent reduction of 7-cyano-7-deazaguanine (preQ0) to 7-aminomethyl-7-deazaguanine (preQ1). The polypeptide is NADPH-dependent 7-cyano-7-deazaguanine reductase (Salmonella paratyphi B (strain ATCC BAA-1250 / SPB7)).